The primary structure comprises 90 residues: Small ribosomal subunit protein uS17 (90 aa).

Belongs to the universal ribosomal protein uS17 family. Part of the 30S ribosomal subunit.

In terms of biological role, one of the primary rRNA binding proteins, it binds specifically to the 5'-end of 16S ribosomal RNA. The sequence is that of Small ribosomal subunit protein uS17 from Dehalococcoides mccartyi (strain ATCC BAA-2100 / JCM 16839 / KCTC 5957 / BAV1).